A 406-amino-acid chain; its full sequence is Large ribosomal subunit protein uL4z (406 aa).

The tract at residues 56–95 (PYAVSKKAGHQTSAESWGTGRAVSRIPRVPGGGTHRAGQA) is disordered.

It belongs to the universal ribosomal protein uL4 family.

This Arabidopsis thaliana (Mouse-ear cress) protein is Large ribosomal subunit protein uL4z (RPL4A).